Here is a 549-residue protein sequence, read N- to C-terminus: MSISSLHRGYQVLRTLLHYGLDELLAKDKRPKLFPLIRGCFFWIRNQHKDKSAAERLKLAMQELGPVYIKLGQMLSTRRDLLDDEWAYQLAMLQDRVPPFDSALAREAIETELNASIDSLFDDFDDVPLASASIAQVHSATLKSNGKAVVLKVLRPNVEALILADLQLMSHCAALLERILGDGNRLRPAEVIEDYRLTILGELNLKLEALNAIKLRNNFLDSDALYVPYIYEDLSFTRLIVMERIYGIAVSDLSALKAQGTNLKLLAERGVELFFTQVFRDNFFHADMHPGNIFISRDHPDNPYYIGLDCGIMGTLTDVDKRYLAENFLAFFNRDYQRIAQLHLESGWVSEHTDIVAFEQAIKIVCEPMFNKPLAEISFGHVLLALFRTARQFNMVVQPQLVLLQKTLLYIEGLGRQLYPQLDLWQTAKPFLEQWMAKQVGPKALFDKFKSNAPFWAEKLPELPELVYDNLKLGRKLLGTQQQMLDKYLKYQHKAHKSNYLLITSAVFVICGTILFTQAVTLWASLLCLGTGAGLWLLGWQARPKNRKL.

A Protein kinase domain is found at 123-501 (DFDDVPLASA…QHKAHKSNYL (379 aa)). ATP is bound by residues 129–137 (LASASIAQV) and lysine 152. The active-site Proton acceptor is the aspartate 287. The next 2 membrane-spanning stretches (helical) occupy residues 498-517 (SNYL…ILFT) and 521-540 (TLWA…LLGW).

It belongs to the ABC1 family. UbiB subfamily.

Its subcellular location is the cell inner membrane. Its pathway is cofactor biosynthesis; ubiquinone biosynthesis [regulation]. Its function is as follows. Is probably a protein kinase regulator of UbiI activity which is involved in aerobic coenzyme Q (ubiquinone) biosynthesis. This is Probable protein kinase UbiB from Shewanella denitrificans (strain OS217 / ATCC BAA-1090 / DSM 15013).